Consider the following 194-residue polypeptide: Protein LURP-one-related 10 (194 aa).

This sequence belongs to the LOR family.

Functionally, might be related to the phospholipid scramblase and tubby-like superfamily of membrane tethered transcription factors. The chain is Protein LURP-one-related 10 from Arabidopsis thaliana (Mouse-ear cress).